Here is a 473-residue protein sequence, read N- to C-terminus: Trigger factor (473 aa).

Residues 162-243 enclose the PPIase FKBP-type domain; sequence GDFVSIDLSA…VKSIKVRELP (82 aa). Residues 433-473 are disordered; the sequence is TAEFFGPSGEQAEAEQDEAAPAEDATEETDADSDEAADDSK. The span at 444-473 shows a compositional bias: acidic residues; it reads AEAEQDEAAPAEDATEETDADSDEAADDSK.

Belongs to the FKBP-type PPIase family. Tig subfamily.

It localises to the cytoplasm. It carries out the reaction [protein]-peptidylproline (omega=180) = [protein]-peptidylproline (omega=0). Functionally, involved in protein export. Acts as a chaperone by maintaining the newly synthesized protein in an open conformation. Functions as a peptidyl-prolyl cis-trans isomerase. The sequence is that of Trigger factor from Mycolicibacterium vanbaalenii (strain DSM 7251 / JCM 13017 / BCRC 16820 / KCTC 9966 / NRRL B-24157 / PYR-1) (Mycobacterium vanbaalenii).